A 318-amino-acid chain; its full sequence is Retinol dehydrogenase 11 (318 aa).

A helical; Signal-anchor for type II membrane protein transmembrane segment spans residues 1 to 21; it reads MVELMFPLLLLLLPFLLYMAA. Residues 22–318 are Cytoplasmic-facing; that stretch reads PQIRKMLSSG…SCDLLGLPID (297 aa). 48–54 provides a ligand contact to NADP(+); the sequence is GANTGIG. The residue at position 112 (K112) is an N6-acetyllysine. Substrate is bound at residue S177. Y202 acts as the Proton acceptor in catalysis.

It belongs to the short-chain dehydrogenases/reductases (SDR) family. In terms of assembly, interacts with SELENOF. Not glycosylated. As to expression, predominantly expressed in the epithelial cells of prostate, in both basal and luminal secretory cell populations. Expressed at low levels in spleen, thymus, testis, ovary, small intestine, colon, peripherical blood leukocytes, kidney, adrenal gland and fetal liver. Not detected in prostatic fibromuscular stromal cells, endothelial cells, or infiltrating lymphocytes.

It localises to the endoplasmic reticulum membrane. It catalyses the reaction all-trans-retinol + NADP(+) = all-trans-retinal + NADPH + H(+). The enzyme catalyses 11-cis-retinol + NADP(+) = 11-cis-retinal + NADPH + H(+). The catalysed reaction is 9-cis-retinol + NADP(+) = 9-cis-retinal + NADPH + H(+). It carries out the reaction 13-cis-retinol + NADP(+) = 13-cis-retinal + NADPH + H(+). It functions in the pathway cofactor metabolism; retinol metabolism. Its activity is regulated as follows. SELENOF decreases the retinol dehydrogenase activity. In terms of biological role, retinol dehydrogenase with a clear preference for NADP. Displays high activity towards 9-cis, 11-cis and all-trans-retinol, and to a lesser extent on 13-cis-retinol. Exhibits a low reductive activity towards unsaturated medium-chain aldehydes such as cis -6-nonenal and no activity toward nonanal or 4-hydroxy-nonenal. Has no dehydrogenase activity towards steroid. The sequence is that of Retinol dehydrogenase 11 (RDH11) from Homo sapiens (Human).